The primary structure comprises 85 residues: Large ribosomal subunit protein bL31B (85 aa).

This sequence belongs to the bacterial ribosomal protein bL31 family. Type B subfamily. Part of the 50S ribosomal subunit.

In Kocuria rhizophila (strain ATCC 9341 / DSM 348 / NBRC 103217 / DC2201), this protein is Large ribosomal subunit protein bL31B.